Consider the following 457-residue polypeptide: Multidrug resistance protein MdtK (457 aa).

12 helical membrane passes run 11–31 (LLAL…MGFV), 53–73 (IWLP…PVIA), 93–113 (WLAG…GYII), 127–147 (AVGY…FQVA), 160–180 (GMVM…IFIY), 189–209 (GGVG…FSMI), 243–263 (LPIA…ALLV), 276–296 (IALN…AAVT), 314–334 (AART…LFTV), 357–377 (LMLL…GSGI), 387–407 (IFFI…YILA), and 418–438 (PAGF…LMML).

It belongs to the multi antimicrobial extrusion (MATE) (TC 2.A.66.1) family. MdtK subfamily.

The protein localises to the cell inner membrane. Its function is as follows. Multidrug efflux pump that functions probably as a Na(+)/drug antiporter. The sequence is that of Multidrug resistance protein MdtK from Enterobacter sp. (strain 638).